A 577-amino-acid polypeptide reads, in one-letter code: MFS-type transporter CPUR_05422 (577 aa).

Residues 1 to 49 (MSAMSAMGKPEHGSATTSDLEHRATESSLEKQDVEAAPPGPVKPVDPSP) form a disordered region. Basic and acidic residues predominate over residues 19 to 34 (DLEHRATESSLEKQDV). A compositionally biased stretch (pro residues) spans 38 to 47 (PPGPVKPVDP). Helical transmembrane passes span 52–72 (STLKTTLLLASVFLAMFLVAV), 93–113 (DVGWYGSIYLLTCCAFQLLFG), 123–143 (VVLLVSLVIFLAASALCGAAP), 157–177 (VGSAGIFAGNIVAIVHTIPLA), 184–204 (GLMGAVMGLATIIGPLIGGAF), 212–232 (WCFYINLPFGGLALVAIFFYF), 249–269 (ILSLDIPGTILLVPAIVCLLL), 285–305 (IIVLLTLMAVLFVAFIAVQIC), 326–346 (FLTTIAIGSAQYIFVYYIPIW), 359–379 (GIQLLPLMISFVVASIVGGLL), 383–403 (IGYYTALGIFGSSVMAVGAGL), 416–436 (VIGYQILFGFGMGLAFQTPNL), 449–469 (MGIALMFFGQLLSAAIFVAVG), and 525–545 (VFIVGLAMSCVGVVGTSCMEW). A disordered region spans residues 554–577 (PPAGPPAGAPTESAPVETKAAGHT).

This sequence belongs to the major facilitator superfamily. TCR/Tet family.

The protein localises to the membrane. Its function is as follows. MFS-type transporter; part of the ergochrome gene cluster responsible for the typical purple-black color of the ergot sclerotia. The ergochrome gene cluster produces several ergot pigments including the yellow ergochrome secalonic acid and its derivatives, as well as the red anthraquinones endocrocin and clavorubin. The protein is MFS-type transporter CPUR_05422 of Claviceps purpurea (strain 20.1) (Ergot fungus).